The primary structure comprises 274 residues: Dermonecrotic toxin SdSicTox-betaIIB1bxiii (274 aa).

His-5 is a catalytic residue. The Mg(2+) site is built by Glu-25 and Asp-27. His-41 functions as the Nucleophile in the catalytic mechanism. 2 disulfide bridges follow: Cys-45–Cys-51 and Cys-47–Cys-190. Residue Asp-85 participates in Mg(2+) binding.

This sequence belongs to the arthropod phospholipase D family. Class II subfamily. Mg(2+) serves as cofactor. In terms of tissue distribution, expressed by the venom gland.

It localises to the secreted. The enzyme catalyses an N-(acyl)-sphingosylphosphocholine = an N-(acyl)-sphingosyl-1,3-cyclic phosphate + choline. It catalyses the reaction an N-(acyl)-sphingosylphosphoethanolamine = an N-(acyl)-sphingosyl-1,3-cyclic phosphate + ethanolamine. The catalysed reaction is a 1-acyl-sn-glycero-3-phosphocholine = a 1-acyl-sn-glycero-2,3-cyclic phosphate + choline. It carries out the reaction a 1-acyl-sn-glycero-3-phosphoethanolamine = a 1-acyl-sn-glycero-2,3-cyclic phosphate + ethanolamine. Functionally, dermonecrotic toxins cleave the phosphodiester linkage between the phosphate and headgroup of certain phospholipids (sphingolipid and lysolipid substrates), forming an alcohol (often choline) and a cyclic phosphate. This toxin acts on sphingomyelin (SM). It may also act on ceramide phosphoethanolamine (CPE), lysophosphatidylcholine (LPC) and lysophosphatidylethanolamine (LPE), but not on lysophosphatidylserine (LPS), and lysophosphatidylglycerol (LPG). It acts by transphosphatidylation, releasing exclusively cyclic phosphate products as second products. Induces dermonecrosis, hemolysis, increased vascular permeability, edema, inflammatory response, and platelet aggregation. The chain is Dermonecrotic toxin SdSicTox-betaIIB1bxiii from Sicarius cf. damarensis (strain GJB-2008) (Six-eyed sand spider).